An 87-amino-acid polypeptide reads, in one-letter code: Kappa 1a-bungarotoxin (87 aa).

Positions 1-21 are cleaved as a signal peptide; that stretch reads MKTLLLTLVVVTIVCLDLGYT. Disulfide bonds link cysteine 24/cysteine 42, cysteine 35/cysteine 63, cysteine 48/cysteine 52, cysteine 67/cysteine 79, and cysteine 80/cysteine 85.

It belongs to the three-finger toxin family. Long-chain subfamily. Kappa-neurotoxin sub-subfamily. Homo- and heterodimer; non-covalently linked. Expressed by the venom gland.

The protein resides in the secreted. Its function is as follows. Postsynaptic neurotoxin that binds and inhibits neuronal nicotinic acetylcholine receptors (nAChR) with high affinity (IC(50)&lt;100 nM). Is a selective, and slowly reversible antagonist of alpha-3/CHRNA3-containing and some alpha-4/CHRNA4-containing AChRs. This Bungarus candidus (Malayan krait) protein is Kappa 1a-bungarotoxin.